We begin with the raw amino-acid sequence, 374 residues long: Alanine racemase (374 aa).

K35 functions as the Proton acceptor; specific for D-alanine in the catalytic mechanism. The residue at position 35 (K35) is an N6-(pyridoxal phosphate)lysine. R130 serves as a coordination point for substrate. Y261 (proton acceptor; specific for L-alanine) is an active-site residue. Substrate is bound at residue M309.

The protein belongs to the alanine racemase family. The cofactor is pyridoxal 5'-phosphate.

The enzyme catalyses L-alanine = D-alanine. Its pathway is amino-acid biosynthesis; D-alanine biosynthesis; D-alanine from L-alanine: step 1/1. Functionally, catalyzes the interconversion of L-alanine and D-alanine. May also act on other amino acids. In Albidiferax ferrireducens (strain ATCC BAA-621 / DSM 15236 / T118) (Rhodoferax ferrireducens), this protein is Alanine racemase (alr).